The following is a 331-amino-acid chain: Vacuolar protein sorting-associated protein 26B (331 aa).

The disordered stretch occupies residues 310–331; the sequence is AAQRYEGSNPEPTSAQAKEETD.

Belongs to the VPS26 family. Component of the heterotrimeric retromer cargo-selective complex (CSC) which is believed to associate with variable sorting nexins to form functionally distinct retromer complex variants.

The protein resides in the cytoplasm. The protein localises to the membrane. Its subcellular location is the endosome. Acts as a component of the retromer cargo-selective complex (CSC). The CSC is believed to be the core functional component of retromer or respective retromer complex variants acting to prevent missorting of selected transmembrane cargo proteins into the lysosomal degradation pathway. Retromer mediates retrograde transport of cargo proteins from endosomes to the trans-Golgi network (TGN). This chain is Vacuolar protein sorting-associated protein 26B (vps26b), found in Danio rerio (Zebrafish).